Here is a 420-residue protein sequence, read N- to C-terminus: ATP phosphoribosyltransferase regulatory subunit (420 aa).

This sequence belongs to the class-II aminoacyl-tRNA synthetase family. HisZ subfamily. As to quaternary structure, heteromultimer composed of HisG and HisZ subunits.

It is found in the cytoplasm. The protein operates within amino-acid biosynthesis; L-histidine biosynthesis; L-histidine from 5-phospho-alpha-D-ribose 1-diphosphate: step 1/9. Functionally, required for the first step of histidine biosynthesis. May allow the feedback regulation of ATP phosphoribosyltransferase activity by histidine. The protein is ATP phosphoribosyltransferase regulatory subunit of Bacillus cereus (strain ATCC 10987 / NRS 248).